Consider the following 239-residue polypeptide: tRNA1(Val) (adenine(37)-N6)-methyltransferase (239 aa).

This sequence belongs to the methyltransferase superfamily. tRNA (adenine-N(6)-)-methyltransferase family.

It is found in the cytoplasm. It carries out the reaction adenosine(37) in tRNA1(Val) + S-adenosyl-L-methionine = N(6)-methyladenosine(37) in tRNA1(Val) + S-adenosyl-L-homocysteine + H(+). In terms of biological role, specifically methylates the adenine in position 37 of tRNA(1)(Val) (anticodon cmo5UAC). The polypeptide is tRNA1(Val) (adenine(37)-N6)-methyltransferase (Vibrio parahaemolyticus serotype O3:K6 (strain RIMD 2210633)).